The chain runs to 109 residues: uncharacterized protein (109 aa).

This is an uncharacterized protein from Escherichia coli (strain K12).